Reading from the N-terminus, the 451-residue chain is Probable tyrosyl-DNA phosphodiesterase (451 aa).

A disordered region spans residues 1 to 34 (MKRTIQETPGPSSTTVPPPKKLNSQRNGSNLEPG). Over residues 22 to 32 (LNSQRNGSNLE) the composition is skewed to polar residues. His-131 functions as the Nucleophile in the catalytic mechanism. Lys-133 lines the substrate pocket. Residues 266 to 269 (SIGS) form an interaction with DNA region. The active-site Proton donor/acceptor is the His-356. Lys-358 contributes to the substrate binding site.

It belongs to the tyrosyl-DNA phosphodiesterase family.

The protein localises to the nucleus. Functionally, DNA repair enzyme that can remove a variety of covalent adducts from DNA through hydrolysis of a 3'-phosphodiester bond, giving rise to DNA with a free 3' phosphate. Catalyzes the hydrolysis of dead-end complexes between DNA and the topoisomerase I active site tyrosine residue. Hydrolyzes 3'-phosphoglycolates on protruding 3' ends on DNA double-strand breaks due to DNA damage by radiation and free radicals. Acts on blunt-ended double-strand DNA breaks and on single-stranded DNA. May have low 3'exonuclease activity and may be able to remove a single nucleoside from the 3'end of DNA and RNA molecules with 3'hydroxyl groups. Has no exonuclease activity towards DNA or RNA with a 3'phosphate. This chain is Probable tyrosyl-DNA phosphodiesterase, found in Caenorhabditis elegans.